We begin with the raw amino-acid sequence, 844 residues long: Beta-mannosidase B (844 aa).

E432 serves as the catalytic Proton donor.

This sequence belongs to the glycosyl hydrolase 2 family. Beta-mannosidase B subfamily.

The catalysed reaction is Hydrolysis of terminal, non-reducing beta-D-mannose residues in beta-D-mannosides.. It functions in the pathway glycan metabolism; N-glycan degradation. Functionally, exoglycosidase that cleaves the single beta-linked mannose residue from the non-reducing end of beta-mannosidic oligosaccharides of various complexity and length. Prefers mannobiose over mannotriose and has no activity against polymeric mannan. Is also severely restricted by galactosyl substitutions at the +1 subsite. In Aspergillus oryzae (strain ATCC 42149 / RIB 40) (Yellow koji mold), this protein is Beta-mannosidase B (mndB).